The following is a 128-amino-acid chain: Ribonuclease P protein component (128 aa).

It belongs to the RnpA family. As to quaternary structure, consists of a catalytic RNA component (M1 or rnpB) and a protein subunit.

The catalysed reaction is Endonucleolytic cleavage of RNA, removing 5'-extranucleotides from tRNA precursor.. In terms of biological role, RNaseP catalyzes the removal of the 5'-leader sequence from pre-tRNA to produce the mature 5'-terminus. It can also cleave other RNA substrates such as 4.5S RNA. The protein component plays an auxiliary but essential role in vivo by binding to the 5'-leader sequence and broadening the substrate specificity of the ribozyme. This is Ribonuclease P protein component from Prochlorococcus marinus (strain MIT 9313).